A 187-amino-acid polypeptide reads, in one-letter code: Oleosin Zm-II (187 aa).

Residue Ala-2 is modified to N-acetylalanine. Positions 2-51 are polar; it reads ADRDRSGIYGGAHATYGQQQQQGGGGRPMGEQVKKGMLHDKGPTASQALT. A disordered region spans residues 17 to 42; it reads YGQQQQQGGGGRPMGEQVKKGMLHDK. Basic and acidic residues predominate over residues 33–42; the sequence is QVKKGMLHDK. The next 3 helical transmembrane spans lie at 50-70, 83-103, and 104-124; these read LTVA…GLAL, VFLI…TAVM, and GFLT…CLAN. Positions 52 to 123 are hydrophobic; it reads VATLFPLGGL…GGLSSLTCLA (72 aa). Residues 155–169 show a composition bias toward low complexity; sequence TAQAGQAIQGRAQEA. The disordered stretch occupies residues 155-187; the sequence is TAQAGQAIQGRAQEAGTGGGAGAGAGGGGRASS. A compositionally biased stretch (gly residues) spans 170–187; it reads GTGGGAGAGAGGGGRASS.

The protein belongs to the oleosin family. The N-terminus is blocked. As to expression, found in embryonic axis, scutellum, and aleurone layer.

It is found in the lipid droplet. Its subcellular location is the membrane. May have a structural role to stabilize the lipid body during desiccation of the seed by preventing coalescence of the oil. Probably interacts with both lipid and phospholipid moieties of lipid bodies. May also provide recognition signals for specific lipase anchorage in lipolysis during seedling growth. The chain is Oleosin Zm-II (OLE18) from Zea mays (Maize).